The following is a 214-amino-acid chain: Ras-like protein 2 (214 aa).

GTP contacts are provided by residues 19-24 (GVGKSC), 35-41 (VDEYDPT), 65-66 (AG), 122-125 (NKCD), and 152-154 (SAK). An Effector region motif is present at residues 38 to 46 (YDPTIEDSY). The segment at 178–197 (QGYSTGSGGSNAGGPSNKME) is disordered. Cysteine methyl ester is present on cysteine 211. Cysteine 211 carries the S-farnesyl cysteine lipid modification. The propeptide at 212 to 214 (VLM) is removed in mature form.

Belongs to the small GTPase superfamily. Ras family. In terms of assembly, interacts with farnesyltransferase beta subunit RAM1.

Its subcellular location is the cell membrane. Its activity is regulated as follows. Alternates between an inactive form bound to GDP and an active form bound to GTP. Activated by a guanine nucleotide-exchange factor (GEF) and inactivated by a GTPase-activating protein (GAP). Modulates the activity of the adenylate cyclase catalytic subunit and therefore affects the biosynthesis of cyclic-AMP. Plays a role in both surface attachment and surface recognition of appressoria, a highly specialized infection structure for plant penetration. Regulates appressorium formation by coordinated regulation of cAMP signaling and Pmk1 MAPK pathways. The protein is Ras-like protein 2 of Pyricularia oryzae (strain 70-15 / ATCC MYA-4617 / FGSC 8958) (Rice blast fungus).